The chain runs to 417 residues: N-acetylmuramoyl-L-alanine amidase AmiC (417 aa).

Positions 1–31 (MSGSNTAISRRRLLQGAGAMWLLSVSQVSLA) form a signal peptide, tat-type signal. The segment at 166 to 185 (LEKQVPPAQSGPQPGKAGRD) is disordered. The region spanning 190-404 (IMLDPGHGGE…VAESILAGIK (215 aa)) is the MurNAc-LAA domain.

It belongs to the N-acetylmuramoyl-L-alanine amidase 3 family. Post-translationally, predicted to be exported by the Tat system. The position of the signal peptide cleavage has not been experimentally proven.

The protein localises to the periplasm. The catalysed reaction is Hydrolyzes the link between N-acetylmuramoyl residues and L-amino acid residues in certain cell-wall glycopeptides.. Its function is as follows. Cell-wall hydrolase involved in septum cleavage during cell division. The chain is N-acetylmuramoyl-L-alanine amidase AmiC (amiC) from Escherichia coli O6:H1 (strain CFT073 / ATCC 700928 / UPEC).